A 201-amino-acid chain; its full sequence is Glycolipid transfer protein (201 aa).

Residues 28-168 (IATTQFLEAC…KDFYAKLGDD (141 aa)) are glycolipid transfer protein homology domain.

Its function is as follows. Cargo transport protein that plays a key role in transport and secretion of liamocins, glycolipids (also called heavy oils) composed of a single mannitol or arabitol headgroup linked to either three, four or even six 3,5-dihydroxydecanoic ester tail-groups. The polypeptide is Glycolipid transfer protein (Aureobasidium melanogenum (Aureobasidium pullulans var. melanogenum)).